Here is a 249-residue protein sequence, read N- to C-terminus: Probable cobalt-factor III C(17)-methyltransferase (249 aa).

It belongs to the precorrin methyltransferase family.

The catalysed reaction is Co(II)-factor III + S-adenosyl-L-methionine + H(+) = Co(II)-factor IV + S-adenosyl-L-homocysteine. It functions in the pathway cofactor biosynthesis; adenosylcobalamin biosynthesis; cob(II)yrinate a,c-diamide from sirohydrochlorin (anaerobic route): step 3/10. Functionally, methyltransferase that likely catalyzes the ring contraction and methylation of C-17 in cobalt-factor III to form cobalt-factor IV. May also convert cobalt-precorrin-3 to cobalt-precorrin-4. This Methanocaldococcus jannaschii (strain ATCC 43067 / DSM 2661 / JAL-1 / JCM 10045 / NBRC 100440) (Methanococcus jannaschii) protein is Probable cobalt-factor III C(17)-methyltransferase (cbiH).